We begin with the raw amino-acid sequence, 101 residues long: Protamine-3 (101 aa).

Residues 1–101 (MGSRCAKLST…PSPEPKQTHS (101 aa)) form a disordered region. Acidic residues predominate over residues 45 to 67 (EGEEEEEDEEEEEEEEEEEEEEQ). At S93 the chain carries Phosphoserine.

It belongs to the protamine P3 family. Testis.

It is found in the nucleus. It localises to the chromosome. In terms of biological role, protamines substitute for histones in the chromatin of sperm during the haploid phase of spermatogenesis. They compact sperm DNA into a highly condensed, stable and inactive complex. The sequence is that of Protamine-3 (Prm3) from Mus musculus (Mouse).